A 262-amino-acid polypeptide reads, in one-letter code: 3-deoxy-manno-octulosonate cytidylyltransferase (262 aa).

The protein belongs to the KdsB family.

It is found in the cytoplasm. The enzyme catalyses 3-deoxy-alpha-D-manno-oct-2-ulosonate + CTP = CMP-3-deoxy-beta-D-manno-octulosonate + diphosphate. It functions in the pathway nucleotide-sugar biosynthesis; CMP-3-deoxy-D-manno-octulosonate biosynthesis; CMP-3-deoxy-D-manno-octulosonate from 3-deoxy-D-manno-octulosonate and CTP: step 1/1. The protein operates within bacterial outer membrane biogenesis; lipopolysaccharide biosynthesis. Its function is as follows. Activates KDO (a required 8-carbon sugar) for incorporation into bacterial lipopolysaccharide in Gram-negative bacteria. The sequence is that of 3-deoxy-manno-octulosonate cytidylyltransferase from Acidovorax ebreus (strain TPSY) (Diaphorobacter sp. (strain TPSY)).